The chain runs to 145 residues: MKLTNYVQEVSLADFGKPFHHKAYWNKRLKTTGGRFFPKDGHLDFNPRMLEENGELIFRKIVRHELCHYHLYFEGRGYHHKDRDFKDLLAQVNGLRYVPTSSKSKTNHHYSCQTCGQVYQRKRRINLSKYVCGNCHGKLIEKNQS.

In terms of domain architecture, SprT-like spans 4 to 140 (TNYVQEVSLA…VCGNCHGKLI (137 aa)). H64 is a binding site for Zn(2+). E65 is an active-site residue. H68 contacts Zn(2+).

This sequence belongs to the SprT family. It depends on Zn(2+) as a cofactor.

The protein resides in the cytoplasm. The sequence is that of Protein SprT-like from Streptococcus pyogenes serotype M18 (strain MGAS8232).